The sequence spans 608 residues: Elongation factor 4 (608 aa).

The tr-type G domain occupies 11–193 (SHIRNFSIVA…AIVHKLPAPK (183 aa)). GTP-binding positions include 23 to 28 (DHGKST) and 140 to 143 (NKID).

It belongs to the TRAFAC class translation factor GTPase superfamily. Classic translation factor GTPase family. LepA subfamily.

Its subcellular location is the cell inner membrane. The catalysed reaction is GTP + H2O = GDP + phosphate + H(+). In terms of biological role, required for accurate and efficient protein synthesis under certain stress conditions. May act as a fidelity factor of the translation reaction, by catalyzing a one-codon backward translocation of tRNAs on improperly translocated ribosomes. Back-translocation proceeds from a post-translocation (POST) complex to a pre-translocation (PRE) complex, thus giving elongation factor G a second chance to translocate the tRNAs correctly. Binds to ribosomes in a GTP-dependent manner. The chain is Elongation factor 4 from Rhizobium meliloti (strain 1021) (Ensifer meliloti).